The following is a 651-amino-acid chain: Coiled-coil domain-containing protein 81 (651 aa).

Positions Leu-194 to Gln-314 are disordered. Residue Ser-206 is modified to Phosphoserine. Basic and acidic residues-rich tracts occupy residues Arg-212–Pro-222 and Gly-232–Gly-250. Residues Ser-265 to Ser-275 show a composition bias toward polar residues. A phosphoserine mark is found at Ser-273, Ser-275, Ser-294, and Ser-416. Coiled-coil stretches lie at residues Ser-428–Ala-465 and Lys-539–Ala-566.

The protein localises to the cytoplasm. Its subcellular location is the cytoskeleton. It localises to the microtubule organizing center. The protein resides in the centrosome. The protein is Coiled-coil domain-containing protein 81 (Ccdc81) of Rattus norvegicus (Rat).